Here is a 357-residue protein sequence, read N- to C-terminus: Glutamate 5-kinase (357 aa).

Residue Lys7 coordinates ATP. Residues Ser43, Asp130, and Asn142 each contribute to the substrate site. Residues 162-163 (TD) and 205-211 (TGGMTTK) each bind ATP. In terms of domain architecture, PUA spans 270–341 (EGELCLDQGA…QALSVVTDAE (72 aa)).

Belongs to the glutamate 5-kinase family.

The protein localises to the cytoplasm. The enzyme catalyses L-glutamate + ATP = L-glutamyl 5-phosphate + ADP. The protein operates within amino-acid biosynthesis; L-proline biosynthesis; L-glutamate 5-semialdehyde from L-glutamate: step 1/2. Functionally, catalyzes the transfer of a phosphate group to glutamate to form L-glutamate 5-phosphate. This Synechococcus sp. (strain CC9902) protein is Glutamate 5-kinase.